The sequence spans 339 residues: Methylthioribose-1-phosphate isomerase (339 aa).

Substrate is bound by residues 52–54 (RGA), R89, and Q188. D229 acts as the Proton donor in catalysis. 239–240 (NK) serves as a coordination point for substrate.

Belongs to the eIF-2B alpha/beta/delta subunits family. MtnA subfamily.

It carries out the reaction 5-(methylsulfanyl)-alpha-D-ribose 1-phosphate = 5-(methylsulfanyl)-D-ribulose 1-phosphate. Its pathway is amino-acid biosynthesis; L-methionine biosynthesis via salvage pathway; L-methionine from S-methyl-5-thio-alpha-D-ribose 1-phosphate: step 1/6. Functionally, catalyzes the interconversion of methylthioribose-1-phosphate (MTR-1-P) into methylthioribulose-1-phosphate (MTRu-1-P). This is Methylthioribose-1-phosphate isomerase from Anaeromyxobacter sp. (strain K).